Reading from the N-terminus, the 35-residue chain is Non-specific lipid-transfer protein 1 (35 aa).

An intrachain disulfide couples C13 to C28.

Seeds.

Plant non-specific lipid-transfer proteins transfer phospholipids as well as galactolipids across membranes. May play a role in wax or cutin deposition in the cell walls of expanding epidermal cells and certain secretory tissues. Inhibits the growth of F.oxysporum and P.infestans. The polypeptide is Non-specific lipid-transfer protein 1 (Nigella sativa (Black cumin)).